The following is a 459-amino-acid chain: Sorting nexin-8 (459 aa).

A disordered region spans residues 1-37 (MTGRAMDPLPSPAVAAAAEAEADEEADPPATGPRTSQ). A PX domain is found at 68-176 (AKDTVQVELI…KLFLSFSGSD (109 aa)). Residues Arg104, Lys130, and Arg143 each contribute to the a 1,2-diacyl-sn-glycero-3-phospho-(1D-myo-inositol-3-phosphate) site. Residue Thr446 is modified to Phosphothreonine. The residue at position 450 (Ser450) is a Phosphoserine.

This sequence belongs to the sorting nexin family.

The protein localises to the early endosome membrane. Its function is as follows. May be involved in several stages of intracellular trafficking. May play a role in intracellular protein transport from early endosomes to the trans-Golgi network. The chain is Sorting nexin-8 (Snx8) from Mus musculus (Mouse).